We begin with the raw amino-acid sequence, 337 residues long: GTPase Obg (337 aa).

In terms of domain architecture, Obg spans 1 to 159 (MQFIDYVKIY…RWVILELKLL (159 aa)). The region spanning 160–331 (ADVGLIGLPN…LLHYLSEKVG (172 aa)) is the OBG-type G domain. Residues 166-173 (GLPNAGKS), 191-195 (FTTLI), 213-216 (DIPG), 283-286 (TKID), and 312-314 (SAV) contribute to the GTP site. Ser-173 and Thr-193 together coordinate Mg(2+).

It belongs to the TRAFAC class OBG-HflX-like GTPase superfamily. OBG GTPase family. As to quaternary structure, monomer. Mg(2+) is required as a cofactor.

Its subcellular location is the cytoplasm. In terms of biological role, an essential GTPase which binds GTP, GDP and possibly (p)ppGpp with moderate affinity, with high nucleotide exchange rates and a fairly low GTP hydrolysis rate. Plays a role in control of the cell cycle, stress response, ribosome biogenesis and in those bacteria that undergo differentiation, in morphogenesis control. This Thermodesulfovibrio yellowstonii (strain ATCC 51303 / DSM 11347 / YP87) protein is GTPase Obg.